The chain runs to 289 residues: Acetylglutamate kinase (289 aa).

Substrate is bound by residues Gly-60 to Gly-61, Arg-82, and Asn-186.

This sequence belongs to the acetylglutamate kinase family. ArgB subfamily.

Its subcellular location is the cytoplasm. It carries out the reaction N-acetyl-L-glutamate + ATP = N-acetyl-L-glutamyl 5-phosphate + ADP. The protein operates within amino-acid biosynthesis; L-arginine biosynthesis; N(2)-acetyl-L-ornithine from L-glutamate: step 2/4. Its function is as follows. Catalyzes the ATP-dependent phosphorylation of N-acetyl-L-glutamate. In Methanoculleus marisnigri (strain ATCC 35101 / DSM 1498 / JR1), this protein is Acetylglutamate kinase.